The following is an 823-amino-acid chain: Degenerin-like protein asic-1 (823 aa).

Topologically, residues 1-38 are cytoplasmic; it reads MGKNSLKRALELDVVDFAEHTSAHGIPRAYVSTGWRRY. The chain crosses the membrane as a helical span at residues 39 to 59; sequence MWLLCFLFCLSCFGHQAYLIV. Residues 60–767 are Extracellular-facing; sequence ERFNRNDIIV…FGGQLGLWMG (708 aa). 2 cysteine pairs are disulfide-bonded: Cys-86/Cys-518 and Cys-494/Cys-501. Residues Asn-228, Asn-326, Asn-347, Asn-415, and Asn-486 are each glycosylated (N-linked (GlcNAc...) asparagine). Residues Asn-527 and Asn-546 are each glycosylated (N-linked (GlcNAc...) asparagine). Intrachain disulfides connect Cys-604–Cys-687, Cys-625–Cys-683, Cys-629–Cys-681, and Cys-638–Cys-664. The GAS motif; ion selectivity filter motif lies at 767–769; it reads GVS. The chain crosses the membrane as a helical span at residues 768–788; the sequence is VSVITIGEVACFFFEVFISLI. The Cytoplasmic portion of the chain corresponds to 789–795; that stretch reads SSNRTKR.

This sequence belongs to the amiloride-sensitive sodium channel (TC 1.A.6) family. In terms of assembly, homotrimer. Heterotrimer; with other ASIC proteins producing channel with different properties.

It localises to the cell membrane. Its subcellular location is the postsynaptic cell membrane. The protein resides in the cell projection. It is found in the dendrite. The enzyme catalyses Na(+)(in) = Na(+)(out). It carries out the reaction K(+)(in) = K(+)(out). It catalyses the reaction Li(+)(in) = Li(+)(out). The catalysed reaction is Ca(2+)(in) = Ca(2+)(out). Functionally, forms voltage-independent, pH-gated trimeric sodium channels that act as postsynaptic excitatory receptors in the nervous system, playing a crucial role in regulating synaptic plasticity, learning, and memory. Promotes synaptic vesicle fusion to positively regulate the release of dopamine at dopaminergic neuron synapses. Displays high selectivity for sodium ions but can also permit the permeation of other cations. This is Degenerin-like protein asic-1 from Caenorhabditis elegans.